Consider the following 494-residue polypeptide: Smoothelin-like protein 1 (494 aa).

Basic and acidic residues-rich tracts occupy residues 1 to 10 (MEQKEGKLSE), 74 to 104 (DEVK…KEET), 112 to 166 (TGRK…KATV), and 179 to 232 (TGQR…KEEA). Residues 1-348 (MEQKEGKLSE…ARPRGPRAQN (348 aa)) are disordered. Residues 123 to 145 (KEAEEKESTLASEKQKAEEKEAK) adopt a coiled-coil conformation. Positions 233–255 (DAKEEAEDAEEAEPGSPSEEQEQ) are enriched in acidic residues. 2 stretches are compositionally biased toward low complexity: residues 269–279 (PSSPEEWPESP) and 302–314 (SPSA…SDVP). A compositionally biased stretch (basic and acidic residues) spans 324 to 335 (GEKKEKAPERRV). Ser-336 carries the phosphoserine modification. The Calponin-homology (CH) domain occupies 378 to 484 (GGVKNMLLEW…YIQELYRSLV (107 aa)). The segment at 476 to 494 (IQELYRSLVQKGLVKTKKK) is calmodulin-binding.

The protein belongs to the smoothelin family. In terms of assembly, interacts with PPP1R12A. Maximal phosphorylation of Ser-336 correlates with maximal relaxation of aorta in response to acetylcholine. In terms of tissue distribution, expressed in striated muscles, specifically in type 2a fibers (at protein level).

It localises to the cytoplasm. It is found in the myofibril. Its subcellular location is the sarcomere. The protein localises to the i band. The protein resides in the m line. It localises to the nucleus. Plays a role in the regulation of contractile properties of both striated and smooth muscles. When unphosphorylated, may inhibit myosin dephosphorylation. Phosphorylation at Ser-299 reduces this inhibitory activity. This Homo sapiens (Human) protein is Smoothelin-like protein 1 (SMTNL1).